Consider the following 793-residue polypeptide: Serine/threonine-protein kinase CLA4 (793 aa).

Residues 8–27 (RELSESDFQDIGPAPKPPPV) form a disordered region. The region spanning 56 to 168 (QRKKSGWVSY…WLDSIFSKCP (113 aa)) is the PH domain. In terms of domain architecture, CRIB spans 173-186 (VSSPTNFTHKVHVG). Disordered stretches follow at residues 243-369 (AAAQ…ESPT) and 383-476 (QKQL…RPTM). Polar residues-rich tracts occupy residues 258-276 (TLSS…STPP), 312-337 (GVTT…QSGP), and 355-369 (LGNS…ESPT). In terms of domain architecture, Protein kinase spans 498–776 (FQMIEKAGQG…TEELLHHSFF (279 aa)). ATP contacts are provided by residues 504–512 (AGQGASGSV) and K545. Residue D644 is the Proton acceptor of the active site.

It belongs to the protein kinase superfamily. STE Ser/Thr protein kinase family. STE20 subfamily.

The enzyme catalyses L-seryl-[protein] + ATP = O-phospho-L-seryl-[protein] + ADP + H(+). It carries out the reaction L-threonyl-[protein] + ATP = O-phospho-L-threonyl-[protein] + ADP + H(+). Functionally, required for hyphal maturation and for septation. In Eremothecium gossypii (strain ATCC 10895 / CBS 109.51 / FGSC 9923 / NRRL Y-1056) (Yeast), this protein is Serine/threonine-protein kinase CLA4 (CLA4).